Consider the following 237-residue polypeptide: Golgi to ER traffic protein 1 (237 aa).

The Lumenal segment spans residues Met1–Gly4. A helical membrane pass occupies residues Gly5–Thr24. Residues Ser25–Lys110 lie on the Cytoplasmic side of the membrane. Residues Glu40–Asn99 adopt a coiled-coil conformation. Residues Leu111–Tyr131 traverse the membrane as a helical segment. Over His132–Gly176 the chain is Lumenal. Residues Val177–Leu193 traverse the membrane as a helical segment. Over Glu194–Asp237 the chain is Cytoplasmic. Positions Pro205–Asp237 are disordered. Positions Thr217–Asp237 are enriched in basic and acidic residues.

Belongs to the WRB/GET1 family. As to quaternary structure, component of the Golgi to ER traffic (GET) complex, which is composed of GET1, GET2 and GET3. Within the complex, GET1 and GET2 form a heterotetramer which is stabilized by phosphatidylinositol binding and which binds to the GET3 homodimer.

Its subcellular location is the endoplasmic reticulum membrane. The protein resides in the golgi apparatus membrane. Required for the post-translational delivery of tail-anchored (TA) proteins to the endoplasmic reticulum. Together with GET2, acts as a membrane receptor for soluble GET3, which recognizes and selectively binds the transmembrane domain of TA proteins in the cytosol. The GET complex cooperates with the HDEL receptor ERD2 to mediate the ATP-dependent retrieval of resident ER proteins that contain a C-terminal H-D-E-L retention signal from the Golgi to the ER. This Zygosaccharomyces rouxii (strain ATCC 2623 / CBS 732 / NBRC 1130 / NCYC 568 / NRRL Y-229) protein is Golgi to ER traffic protein 1.